Reading from the N-terminus, the 225-residue chain is Glycerol-3-phosphate acyltransferase (225 aa).

The next 6 helical transmembrane spans lie at 6–26 (FFFF…LIIG), 55–75 (WGIV…IICL), 95–115 (DIAI…SIFN), 135–155 (PFIG…VGYA), 160–180 (IMAT…PGIT), and 187–207 (ILYF…HSNI).

Belongs to the PlsY family. In terms of assembly, probably interacts with PlsX.

The protein resides in the cell membrane. The catalysed reaction is an acyl phosphate + sn-glycerol 3-phosphate = a 1-acyl-sn-glycero-3-phosphate + phosphate. It participates in lipid metabolism; phospholipid metabolism. Its function is as follows. Catalyzes the transfer of an acyl group from acyl-phosphate (acyl-PO(4)) to glycerol-3-phosphate (G3P) to form lysophosphatidic acid (LPA). This enzyme utilizes acyl-phosphate as fatty acyl donor, but not acyl-CoA or acyl-ACP. This chain is Glycerol-3-phosphate acyltransferase, found in Phytoplasma australiense.